Here is a 474-residue protein sequence, read N- to C-terminus: Alpha-galactosidase (474 aa).

An N-terminal signal peptide occupies residues 1 to 22; that stretch reads MINFSLLTSIVLLASKVVGVSP. Intrachain disulfides connect Cys43–Cys75 and Cys122–Cys152. The N-linked (GlcNAc...) asparagine glycan is linked to Asn44. Substrate is bound by residues Asp73, Asp74, and Lys148. The active-site Nucleophile is Asp150. Asn176 carries an N-linked (GlcNAc...) asparagine glycan. Residue Arg206 coordinates substrate. Asp210 (proton donor) is an active-site residue. 2 disulfide bridges follow: Cys222-Cys238 and Cys224-Cys231. Gln252 lines the substrate pocket. N-linked (GlcNAc...) asparagine glycosylation is found at Asn271, Asn414, Asn423, Asn436, and Asn455.

This sequence belongs to the glycosyl hydrolase 27 family. As to quaternary structure, homotetramer.

The protein localises to the secreted. The catalysed reaction is Hydrolysis of terminal, non-reducing alpha-D-galactose residues in alpha-D-galactosides, including galactose oligosaccharides, galactomannans and galactolipids.. The protein is Alpha-galactosidase (MEL) of Torulaspora delbrueckii (Yeast).